The sequence spans 526 residues: Peptide chain release factor 3 (526 aa).

One can recognise a tr-type G domain in the interval 8 to 277; that stretch reads SKRRTFAIIS…GLTRWAPAPQ (270 aa). GTP-binding positions include 17–24, 85–89, and 139–142; these read SHPDAGKT, DTPGH, and NKLD.

The protein belongs to the TRAFAC class translation factor GTPase superfamily. Classic translation factor GTPase family. PrfC subfamily.

It is found in the cytoplasm. Functionally, increases the formation of ribosomal termination complexes and stimulates activities of RF-1 and RF-2. It binds guanine nucleotides and has strong preference for UGA stop codons. It may interact directly with the ribosome. The stimulation of RF-1 and RF-2 is significantly reduced by GTP and GDP, but not by GMP. The protein is Peptide chain release factor 3 of Vibrio atlanticus (strain LGP32) (Vibrio splendidus (strain Mel32)).